The chain runs to 44 residues: Protein non-structural 7b (44 aa).

Residues 9–29 (FYLCFLAFLLFLVLIMLIIFW) traverse the membrane as a helical segment.

It is found in the host membrane. The chain is Protein non-structural 7b from Homo sapiens (Human).